We begin with the raw amino-acid sequence, 460 residues long: ATP synthase subunit beta (460 aa).

ATP is bound at residue 150–157 (GGAGVGKT).

The protein belongs to the ATPase alpha/beta chains family. F-type ATPases have 2 components, CF(1) - the catalytic core - and CF(0) - the membrane proton channel. CF(1) has five subunits: alpha(3), beta(3), gamma(1), delta(1), epsilon(1). CF(0) has three main subunits: a(1), b(2) and c(9-12). The alpha and beta chains form an alternating ring which encloses part of the gamma chain. CF(1) is attached to CF(0) by a central stalk formed by the gamma and epsilon chains, while a peripheral stalk is formed by the delta and b chains.

The protein resides in the cell inner membrane. The enzyme catalyses ATP + H2O + 4 H(+)(in) = ADP + phosphate + 5 H(+)(out). In terms of biological role, produces ATP from ADP in the presence of a proton gradient across the membrane. The catalytic sites are hosted primarily by the beta subunits. This Sodalis glossinidius (strain morsitans) protein is ATP synthase subunit beta.